A 261-amino-acid polypeptide reads, in one-letter code: MEMO1 family protein AF_2310 (261 aa).

Belongs to the MEMO1 family.

The protein is MEMO1 family protein AF_2310 of Archaeoglobus fulgidus (strain ATCC 49558 / DSM 4304 / JCM 9628 / NBRC 100126 / VC-16).